Here is a 480-residue protein sequence, read N- to C-terminus: Probable GH family 25 lysozyme 3 (480 aa).

The first 20 residues, 1-20 (MNKLILSILSVLLIVSIASA), serve as a signal peptide directing secretion. The region spanning 21–231 (GNGIDISSGT…STTSSSATSS (211 aa)) is the Ch-type lysozyme domain. Residues aspartate 25, aspartate 114, and glutamate 116 contribute to the active site. Residues 219-472 (SGSSTTSSSA…SSGSGNYTSG (254 aa)) are compositionally biased toward low complexity. The segment at 219–480 (SGSSTTSSSA…SGSGNGAFLF (262 aa)) is disordered. N-linked (GlcNAc...) asparagine glycans are attached at residues asparagine 423, asparagine 428, asparagine 437, asparagine 446, and asparagine 468.

This sequence belongs to the glycosyl hydrolase 25 family.

The protein localises to the secreted. The enzyme catalyses Hydrolysis of (1-&gt;4)-beta-linkages between N-acetylmuramic acid and N-acetyl-D-glucosamine residues in a peptidoglycan and between N-acetyl-D-glucosamine residues in chitodextrins.. This Dictyostelium discoideum (Social amoeba) protein is Probable GH family 25 lysozyme 3.